Here is a 318-residue protein sequence, read N- to C-terminus: tRNA pseudouridine synthase B (318 aa).

The Nucleophile role is filled by D47.

This sequence belongs to the pseudouridine synthase TruB family. Type 1 subfamily.

It catalyses the reaction uridine(55) in tRNA = pseudouridine(55) in tRNA. Its function is as follows. Responsible for synthesis of pseudouridine from uracil-55 in the psi GC loop of transfer RNAs. In Colwellia psychrerythraea (strain 34H / ATCC BAA-681) (Vibrio psychroerythus), this protein is tRNA pseudouridine synthase B.